Here is a 1027-residue protein sequence, read N- to C-terminus: D-2-hydroxyglutarate dehydrogenase (1027 aa).

Residues 48–284 form the FAD-binding PCMH-type domain; sequence YQQLPQAILF…CEAKLNLLLI (237 aa). (R)-2-hydroxyglutarate-binding residues include R405 and H503. The region spanning 665–696 is the 4Fe-4S ferredoxin-type domain; it reads HEVKAAMDTCLACKACASQCPIKIDVPSFRAK. [4Fe-4S] cluster is bound by residues C674, C677, C680, and C684.

In the N-terminal section; belongs to the FAD-binding oxidoreductase/transferase type 4 family. In terms of assembly, homotetramer. [4Fe-4S] cluster is required as a cofactor. It depends on FAD as a cofactor.

The catalysed reaction is (R)-2-hydroxyglutarate + A = 2-oxoglutarate + AH2. Its function is as follows. Catalyzes the oxidation of D-2-hydroxyglutarate (D-2-HGA) to 2-oxoglutarate. Provides the way to recycle D-2-HGA produced during L-serine synthesis by SerA, by converting it back to 2-oxoglutarate. The physiological molecule that functions as the primary electron acceptor during D-2-HGA oxidation is unknown. The polypeptide is D-2-hydroxyglutarate dehydrogenase (Haemophilus influenzae (strain ATCC 51907 / DSM 11121 / KW20 / Rd)).